Consider the following 870-residue polypeptide: DNA topoisomerase 1 (870 aa).

Residues 1-128 (MKSPRFRHSQ…RVYKSSFEAA (128 aa)) form the Toprim domain. The Topo IA-type catalytic domain maps to 143–578 (YDGLAYSAKA…QTNAFVQKIT (436 aa)). The tract at residues 180 to 185 (SSGRVQ) is interaction with DNA. The O-(5'-phospho-DNA)-tyrosine intermediate role is filled by Tyr299. C4-type zinc fingers lie at residues 603–627 (CQCP…HPNC), 693–717 (CPKC…QNGC), and 784–807 (CPLC…KRGC).

The protein belongs to the type IA topoisomerase family. As to quaternary structure, monomer.

The catalysed reaction is ATP-independent breakage of single-stranded DNA, followed by passage and rejoining.. In terms of biological role, releases the supercoiling and torsional tension of DNA, which is introduced during the DNA replication and transcription, by transiently cleaving and rejoining one strand of the DNA duplex. Introduces a single-strand break via transesterification at a target site in duplex DNA. The scissile phosphodiester is attacked by the catalytic tyrosine of the enzyme, resulting in the formation of a DNA-(5'-phosphotyrosyl)-enzyme intermediate and the expulsion of a 3'-OH DNA strand. The free DNA strand then undergoes passage around the unbroken strand, thus removing DNA supercoils. Finally, in the religation step, the DNA 3'-OH attacks the covalent intermediate to expel the active-site tyrosine and restore the DNA phosphodiester backbone. In Bacillus anthracis, this protein is DNA topoisomerase 1 (topX).